The chain runs to 172 residues: Cold-inducible RNA-binding protein (172 aa).

Residues 6-84 (GKLFVGGLSF…RQIRVDQAGK (79 aa)) form the RRM domain. A disordered region spans residues 69 to 172 (GKSVDGRQIR…SYDSYATHNE (104 aa)). Gly residues-rich tracts occupy residues 93–106 (YRGGSAGGRGFFRG) and 114–125 (FSRGGGDRGYGG). Phosphoserine occurs at positions 130, 138, 146, 156, 159, and 163. Residues 138–172 (SRDYYSSRSQSGGYSDRSSGGSYRDSYDSYATHNE) are compositionally biased toward low complexity.

Interacts with EIF4G1. Associates with ribosomes. Post-translationally, methylated on arginine residues. Methylation of the RGG motifs is a prerequisite for recruitment into SGs. In terms of processing, phosphorylated by CK2, GSK3A and GSK3B. Phosphorylation by GSK3B increases RNA-binding activity to the TXN 3'-UTR transcript upon exposure to UV radiation.

The protein localises to the nucleus. The protein resides in the nucleoplasm. It is found in the cytoplasm. Its function is as follows. Cold-inducible mRNA binding protein that plays a protective role in the genotoxic stress response by stabilizing transcripts of genes involved in cell survival. Acts as a translational activator. Seems to play an essential role in cold-induced suppression of cell proliferation. Binds specifically to the 3'-untranslated regions (3'-UTRs) of stress-responsive transcripts RPA2 and TXN. Acts as a translational repressor. Promotes assembly of stress granules (SGs), when overexpressed. The sequence is that of Cold-inducible RNA-binding protein (CIRBP) from Pongo abelii (Sumatran orangutan).